The sequence spans 380 residues: Chorismate synthase (380 aa).

Arg-47 is a binding site for NADP(+). FMN-binding positions include 124–126 (RSS), Gly-288, 303–307 (KPTST), and Arg-329.

This sequence belongs to the chorismate synthase family. In terms of assembly, homotetramer. Requires FMNH2 as cofactor.

The catalysed reaction is 5-O-(1-carboxyvinyl)-3-phosphoshikimate = chorismate + phosphate. Its pathway is metabolic intermediate biosynthesis; chorismate biosynthesis; chorismate from D-erythrose 4-phosphate and phosphoenolpyruvate: step 7/7. Catalyzes the anti-1,4-elimination of the C-3 phosphate and the C-6 proR hydrogen from 5-enolpyruvylshikimate-3-phosphate (EPSP) to yield chorismate, which is the branch point compound that serves as the starting substrate for the three terminal pathways of aromatic amino acid biosynthesis. This reaction introduces a second double bond into the aromatic ring system. This is Chorismate synthase from Leptospira interrogans serogroup Icterohaemorrhagiae serovar copenhageni (strain Fiocruz L1-130).